A 77-amino-acid chain; its full sequence is Dermaseptin-B9 (77 aa).

The signal sequence occupies residues M1–C22. 2 consecutive propeptides follow at residues E23 to E43 and E76 to Q77.

Belongs to the frog skin active peptide (FSAP) family. Dermaseptin subfamily. Expressed by the skin glands.

It is found in the secreted. Has antimicrobial activity. Exhibits a bactericidal activity towards several species of mollicutes, firmicutes and gracilicutes. This peptide is membranotropic and it efficiently depolarizes the plasma membrane. The chain is Dermaseptin-B9 (DRG3) from Phyllomedusa bicolor (Two-colored leaf frog).